A 301-amino-acid chain; its full sequence is Bifunctional protein FolD (301 aa).

Residues 166–168, serine 191, and isoleucine 232 contribute to the NADP(+) site; that span reads GKS.

The protein belongs to the tetrahydrofolate dehydrogenase/cyclohydrolase family. As to quaternary structure, homodimer.

It catalyses the reaction (6R)-5,10-methylene-5,6,7,8-tetrahydrofolate + NADP(+) = (6R)-5,10-methenyltetrahydrofolate + NADPH. The enzyme catalyses (6R)-5,10-methenyltetrahydrofolate + H2O = (6R)-10-formyltetrahydrofolate + H(+). It functions in the pathway one-carbon metabolism; tetrahydrofolate interconversion. Its function is as follows. Catalyzes the oxidation of 5,10-methylenetetrahydrofolate to 5,10-methenyltetrahydrofolate and then the hydrolysis of 5,10-methenyltetrahydrofolate to 10-formyltetrahydrofolate. The polypeptide is Bifunctional protein FolD (Orientia tsutsugamushi (strain Ikeda) (Rickettsia tsutsugamushi)).